The chain runs to 439 residues: Rho GTPase-activating protein 1 (439 aa).

The residue at position 1 (methionine 1) is an N-acetylmethionine. Residues 28–48 are compositionally biased toward basic and acidic residues; it reads IDEKNWPSDEMPDFPKSDDSK. Residues 28-52 are disordered; that stretch reads IDEKNWPSDEMPDFPKSDDSKSSSP. Residues serine 44, serine 47, serine 50, and serine 51 each carry the phosphoserine modification. One can recognise a CRAL-TRIO domain in the interval 63–218; that stretch reads PYYDIARHQI…QVLKYDDFLK (156 aa). Position 65 is a phosphotyrosine (tyrosine 65). Lysine 80 carries the post-translational modification N6-acetyllysine. The short motif at 228-238 is the SH3-binding element; the sequence is PKPMPPRPPLP. A Rho-GAP domain is found at 244-431; sequence VSLQHLQEKN…FLLDHQGELF (188 aa).

As to quaternary structure, found in a complex with XPO7, EIF4A1, ARHGAP1, VPS26A, VPS29, VPS35 and SFN. Interacts with BNIPL. As to expression, ubiquitous.

The protein localises to the cytoplasm. Functionally, GTPase activator for the Rho, Rac and Cdc42 proteins, converting them to the putatively inactive GDP-bound state. Cdc42 seems to be the preferred substrate. The chain is Rho GTPase-activating protein 1 (ARHGAP1) from Homo sapiens (Human).